The sequence spans 308 residues: Tyramine--L-glutamate ligase (308 aa).

The region spanning 89–291 is the ATP-grasp domain; it reads KSLLKSENID…LAELLIKNAN (203 aa). 115–192 is an ATP binding site; that stretch reads TKIIESYPVK…QEFIDGENLS (78 aa). Mg(2+) is bound by residues aspartate 252, glutamate 264, and asparagine 266. Residues aspartate 252, glutamate 264, and asparagine 266 each contribute to the Mn(2+) site.

Mg(2+) is required as a cofactor. Requires Mn(2+) as cofactor.

The enzyme catalyses tyramine + L-glutamate + ATP = gamma-L-glutamyltyramine + ADP + phosphate + H(+). It participates in cofactor biosynthesis; methanofuran biosynthesis. Functionally, catalyzes the formation of an amide bond between tyramine and the gamma carboxy group of L-glutamate. The enzyme also accepts phenylethylamine in vitro. This is Tyramine--L-glutamate ligase (mfnD) from Methanocaldococcus jannaschii (strain ATCC 43067 / DSM 2661 / JAL-1 / JCM 10045 / NBRC 100440) (Methanococcus jannaschii).